A 180-amino-acid polypeptide reads, in one-letter code: Aspartate 1-decarboxylase (180 aa).

The active-site Schiff-base intermediate with substrate; via pyruvic acid is Ser-24. Position 24 is a pyruvic acid (Ser) (Ser-24). Thr-56 lines the substrate pocket. The Proton donor role is filled by Tyr-57. A substrate-binding site is contributed by 72 to 74 (GAA).

This sequence belongs to the PanD family. In terms of assembly, heterooctamer of four alpha and four beta subunits. Pyruvate serves as cofactor. Post-translationally, is synthesized initially as an inactive proenzyme, which is activated by self-cleavage at a specific serine bond to produce a beta-subunit with a hydroxyl group at its C-terminus and an alpha-subunit with a pyruvoyl group at its N-terminus.

The protein resides in the cytoplasm. The enzyme catalyses L-aspartate + H(+) = beta-alanine + CO2. It functions in the pathway cofactor biosynthesis; (R)-pantothenate biosynthesis; beta-alanine from L-aspartate: step 1/1. In terms of biological role, catalyzes the pyruvoyl-dependent decarboxylation of aspartate to produce beta-alanine. The protein is Aspartate 1-decarboxylase of Paramagnetospirillum magneticum (strain ATCC 700264 / AMB-1) (Magnetospirillum magneticum).